The chain runs to 359 residues: Insulin gene enhancer protein ISL-2 (359 aa).

LIM zinc-binding domains lie at Ala-25 to Gly-86 and Ile-87 to Arg-149. The disordered stretch occupies residues Ala-151–Lys-190. Phosphoserine is present on residues Ser-154 and Ser-157. The segment at residues Thr-191–Ser-250 is a DNA-binding region (homeobox). Residues Gly-272–Trp-301 form an LIM-binding domain (LID) region. Ser-279 is subject to Phosphoserine. Over residues Glu-326–Ser-336 the composition is skewed to low complexity. Residues Glu-326–Thr-359 form a disordered region. A compositionally biased stretch (polar residues) spans Asp-337–Thr-359.

In terms of assembly, interacts with LHX4.

It is found in the nucleus. Transcriptional factor that defines subclasses of motoneurons that segregate into columns in the spinal cord and select distinct axon pathways. This is Insulin gene enhancer protein ISL-2 (Isl2) from Mus musculus (Mouse).